The following is a 523-amino-acid chain: MFS-type transporter R5 (523 aa).

The disordered stretch occupies residues 19 to 42; sequence QLNEATAQRESATNNPNDSSSIDE. The segment covering 21–38 has biased composition (polar residues); it reads NEATAQRESATNNPNDSS. N-linked (GlcNAc...) asparagine glycosylation is found at N35, N94, and N143. 2 helical membrane passes run 183 to 203 and 211 to 231; these read AYLTLGLVMGPALGPLIGGLL and AIFWFLMILGGFFFVLTFTFF. Residues N235 and N250 are each glycosylated (N-linked (GlcNAc...) asparagine). The next 6 membrane-spanning stretches (helical) occupy residues 291-311, 319-339, 381-401, 408-428, 443-463, and 470-490; these read FIVCMYGALLFGGYASVISIF, YGYSQVQVGLCYLPFGVGSIL, LTISFPMIFATCGFVVAYGWL, VASVLVIVFLIANVFTGVLIA, ALGAAMNLTRCLMGAGGVAAV, and IGIGYTATATAGVWLAVLPAL.

This sequence belongs to the major facilitator superfamily.

It is found in the membrane. In terms of biological role, MFS-type transporter; part of the gene cluster that mediates the biosynthesis of squalestatin S1 (SQS1, also known as zaragozic acid A), a heavily oxidized fungal polyketide that offers potent cholesterol lowering activity by targeting squalene synthase (SS). The protein is MFS-type transporter R5 of Phoma sp. (strain ATCC 20986 / MF5453).